A 93-amino-acid chain; its full sequence is Integration host factor subunit beta (93 aa).

The protein belongs to the bacterial histone-like protein family. In terms of assembly, heterodimer of an alpha and a beta chain.

Functionally, this protein is one of the two subunits of integration host factor, a specific DNA-binding protein that functions in genetic recombination as well as in transcriptional and translational control. In Tolumonas auensis (strain DSM 9187 / NBRC 110442 / TA 4), this protein is Integration host factor subunit beta.